The following is a 180-amino-acid chain: Large ribosomal subunit protein uL5c (180 aa).

The protein belongs to the universal ribosomal protein uL5 family. In terms of assembly, part of the 50S ribosomal subunit; contacts the 5S rRNA.

The protein localises to the plastid. Its subcellular location is the chloroplast. In terms of biological role, binds 5S rRNA, forms part of the central protuberance of the 50S subunit. This chain is Large ribosomal subunit protein uL5c (rpl5), found in Oedogonium cardiacum (Filamentous green alga).